The primary structure comprises 309 residues: Ribosomal RNA small subunit methyltransferase H (309 aa).

S-adenosyl-L-methionine contacts are provided by residues 41–43, aspartate 61, phenylalanine 85, aspartate 102, and glutamine 109; that span reads GGH.

The protein belongs to the methyltransferase superfamily. RsmH family.

Its subcellular location is the cytoplasm. The enzyme catalyses cytidine(1402) in 16S rRNA + S-adenosyl-L-methionine = N(4)-methylcytidine(1402) in 16S rRNA + S-adenosyl-L-homocysteine + H(+). Its function is as follows. Specifically methylates the N4 position of cytidine in position 1402 (C1402) of 16S rRNA. The protein is Ribosomal RNA small subunit methyltransferase H of Albidiferax ferrireducens (strain ATCC BAA-621 / DSM 15236 / T118) (Rhodoferax ferrireducens).